The chain runs to 259 residues: Isoepoxydon dehydrogenase patN (259 aa).

Positions 69, 96, and 125 each coordinate NADP(+). Active-site proton donor residues include serine 143 and serine 144. The NADP(+) site is built by tyrosine 158, lysine 162, and valine 191. Residue tyrosine 158 is the Proton acceptor of the active site. The Lowers pKa of active site Tyr role is filled by lysine 162.

Belongs to the short-chain dehydrogenases/reductases (SDR) family.

The protein localises to the cytoplasm. Its subcellular location is the cytosol. It catalyses the reaction isoepoxydon + NADP(+) = phyllostine + NADPH + H(+). It participates in mycotoxin biosynthesis; patulin biosynthesis. In terms of biological role, isoepoxydon dehydrogenase; part of the gene cluster that mediates the biosynthesis of patulin, an acetate-derived tetraketide mycotoxin produced by several fungal species that shows antimicrobial properties against several bacteria. PatN catalyzes the conversion of isoepoxydon into phyllostine. The pathway begins with the synthesis of 6-methylsalicylic acid by the polyketide synthase (PKS) patK via condensation of acetate and malonate units. The 6-methylsalicylic acid decarboxylase patG then catalyzes the decarboxylation of 6-methylsalicylic acid to yield m-cresol (also known as 3-methylphenol). These first reactions occur in the cytosol. The intermediate m-cresol is then transported into the endoplasmic reticulum where the cytochrome P450 monooxygenase patH converts it to m-hydroxybenzyl alcohol, which is further converted to gentisyl alcohol by the cytochrome P450 monooxygenase patI. The oxidoreductases patJ and patO further convert gentisyl alcohol to isoepoxydon in the vacuole. PatN catalyzes then the transformation of isoepoxydon into phyllostine. The cluster protein patF is responsible for the conversion from phyllostine to neopatulin whereas the alcohol dehydrogenase patD converts neopatulin to E-ascladiol. The steps between isoepoxydon and E-ascladiol occur in the cytosol, and E-ascladiol is probably secreted to the extracellular space by one of the cluster-specific transporters patC or patM. Finally, the secreted patulin synthase patE catalyzes the conversion of E-ascladiol to patulin. The chain is Isoepoxydon dehydrogenase patN from Penicillium expansum (Blue mold rot fungus).